The primary structure comprises 347 residues: NADH-ubiquinone oxidoreductase chain 2 (347 aa).

10 helical membrane passes run 13 to 33, 55 to 75, 96 to 116, 122 to 142, 151 to 171, 178 to 198, 199 to 219, 237 to 257, 277 to 297, and 326 to 346; these read VFTG…WLGL, AAIK…MAIL, LMIV…FWVP, VPLT…ISIM, TNIL…GGLN, ILAY…PYNP, NITI…FLIL, LTWL…LPPL, IAPT…ARLI, and LPTL…ILSI.

The protein belongs to the complex I subunit 2 family. As to quaternary structure, core subunit of respiratory chain NADH dehydrogenase (Complex I) which is composed of 45 different subunits. Interacts with TMEM242.

It localises to the mitochondrion inner membrane. The catalysed reaction is a ubiquinone + NADH + 5 H(+)(in) = a ubiquinol + NAD(+) + 4 H(+)(out). Functionally, core subunit of the mitochondrial membrane respiratory chain NADH dehydrogenase (Complex I) which catalyzes electron transfer from NADH through the respiratory chain, using ubiquinone as an electron acceptor. Essential for the catalytic activity and assembly of complex I. This chain is NADH-ubiquinone oxidoreductase chain 2, found in Pongo pygmaeus (Bornean orangutan).